The sequence spans 176 residues: Immunity factor for TNT homolog (176 aa).

Interacts with the tuberculosis necrotizing toxin (TNT) homolog, the C-terminal domain of the outer membrane channel protein CpnT.

Its function is as follows. Antitoxin for tuberculosis necrotizing toxin (TNT) homolog. Acts by binding directly to TNT, which inhibits NAD(+) glycohydrolase activity of TNT and protects M.bovis from self-poisoning. The polypeptide is Immunity factor for TNT homolog (Mycobacterium bovis (strain BCG / Pasteur 1173P2)).